Consider the following 158-residue polypeptide: Putative cTAGE family member 3 (158 aa).

Positions 26 to 96 form a coiled coil; that stretch reads QLQESQKQLL…AAVLEEDITD (71 aa).

Belongs to the cTAGE family. Expressed in normal tissues including colon, mammary gland, ovary, placenta, stomach and testis, as well as several fetal tissues.

Functionally, tumor-associated antigen. The sequence is that of Putative cTAGE family member 3 (CTAGE3P) from Homo sapiens (Human).